A 434-amino-acid chain; its full sequence is 3-phosphoshikimate 1-carboxyvinyltransferase (434 aa).

3-phosphoshikimate is bound by residues K22, S23, and R27. Residue K22 participates in phosphoenolpyruvate binding. Residues G93 and R121 each contribute to the phosphoenolpyruvate site. S168, S169, Q170, S199, D320, and K347 together coordinate 3-phosphoshikimate. Residue Q170 coordinates phosphoenolpyruvate. Residue D320 is the Proton acceptor of the active site. 3 residues coordinate phosphoenolpyruvate: R351, R394, and K419.

The protein belongs to the EPSP synthase family. Monomer.

The protein localises to the cytoplasm. The catalysed reaction is 3-phosphoshikimate + phosphoenolpyruvate = 5-O-(1-carboxyvinyl)-3-phosphoshikimate + phosphate. The protein operates within metabolic intermediate biosynthesis; chorismate biosynthesis; chorismate from D-erythrose 4-phosphate and phosphoenolpyruvate: step 6/7. Functionally, catalyzes the transfer of the enolpyruvyl moiety of phosphoenolpyruvate (PEP) to the 5-hydroxyl of shikimate-3-phosphate (S3P) to produce enolpyruvyl shikimate-3-phosphate and inorganic phosphate. This chain is 3-phosphoshikimate 1-carboxyvinyltransferase, found in Burkholderia ambifaria (strain ATCC BAA-244 / DSM 16087 / CCUG 44356 / LMG 19182 / AMMD) (Burkholderia cepacia (strain AMMD)).